A 493-amino-acid chain; its full sequence is Keratin, type II cuticular Hb3 (493 aa).

Residues 1–111 (MTCGFNSIGC…PNAQCVKQEE (111 aa)) form a head region. The IF rod domain maps to 111-422 (EKEQIKSLNS…RLLEGEEQRL (312 aa)). The segment at 112 to 146 (KEQIKSLNSRFAAFIDKVRFLEQQNKLLETKLQFY) is coil 1A. Residues 147-156 (QNRECCQSNL) are linker 1. Residues 157-257 (EPLFAGYIET…YEEEIRILQS (101 aa)) are coil 1B. Residue Lys217 forms a Glycyl lysine isopeptide (Lys-Gly) (interchain with G-Cter in SUMO1) linkage. The interval 258–274 (HISDTSVVVKLDNSRDL) is linker 12. Positions 275–418 (NMDCIVAEIK…ATYRRLLEGE (144 aa)) are coil 2. A tail region spans residues 419–493 (EQRLCEGVEA…GGGSCGQGRH (75 aa)).

The protein belongs to the intermediate filament family. As to quaternary structure, heterotetramer of two type I and two type II keratins. Synthesis begins in the cortex 10-15 cell layers above the apex of the dermal papilla and ends abruptly in the middle of the cortex.

This is Keratin, type II cuticular Hb3 (KRT83) from Homo sapiens (Human).